The following is a 532-amino-acid chain: MGLPMMLQQYCWAACLVICIAISSVDDVGAEQNYGREAVEGNIRLIHGRTENEGSVEIYHATRWGGVCDWWWHMENANVTCKQLGFPGARQFYRRAYFGAHVTTFWVYKMNCLGNETRLEDCYHRPYGRPWLCNAQWAAGVECLPKDEPQGSLRMILGDVPNEGTLETFWDGAWGSVCHTDFGTPDGNVACRQMGYSRGVKSIKTDGHFGFSTGPIILDAVDCEGTEAHITECNMPVTPYQHACPYTHNWDVGVVCKPNVEGDIRLMDGSGPHEGRVEIWHDDAWGTICDDGWDWADANVVCRQAGYRGAVKASGFKGEDFGFTWAPIHTSFVMCTGVEDRLIDCILRDGWTHSCYHVEDASVVCATDDDDTIEIEPKHTRVRIVGMGQGQGRVEVSLGNGWGRVCDPDWSDHEAKTVCYHAGYKWGASRAAGSAEVSAPFDLEAPFIIDGITCSGVENETLSQCQMKVSADMTCATGDVGVVCEGSTAPPSGMSIAVIGGAAGGGVAGLAVAAFAFYYIKFVKPAGGGGQA.

An N-terminal signal peptide occupies residues M1 to A30. The Extracellular portion of the chain corresponds to E31–P491. 4 SRCR domains span residues I43–L144, L153–K257, I264–A366, and V382–E485. Cystine bridges form between C68–C133, C81–C143, C112–C122, C178–C244, C191–C256, C223–C233, C289–C355, C302–C365, C335–C345, C406–C475, C419–C484, and C454–C465. 2 N-linked (GlcNAc...) asparagine glycosylation sites follow: N78 and N115. N459 is a glycosylation site (N-linked (GlcNAc...) asparagine). The helical transmembrane segment at S492–I520 threads the bilayer. The Cytoplasmic portion of the chain corresponds to K521–A532.

It is found in the membrane. Its function is as follows. Receptor for the egg peptide speract. This Strongylocentrotus purpuratus (Purple sea urchin) protein is Egg peptide speract receptor.